The sequence spans 691 residues: TBC1 domain family member 15 (691 aa).

Ala2 bears the N-acetylalanine mark. Residues Ser23, Ser70, Ser205, Pro213, and Ser274 each carry the phosphoserine modification. In terms of domain architecture, Rab-GAP TBC spans 346 to 556 (GLSHALRKQA…RLWEVMWTEL (211 aa)). 2 positions are modified to phosphoserine: Ser640 and Ser675. Thr689 bears the Phosphothreonine mark.

In terms of assembly, interacts with non-phosphorylated form of RAB8A; phosphorylation of RAB8A at 'Thr-72' disrupts this interaction. Interacts with ARMC12. As to expression, ubiquitous.

Its subcellular location is the cytoplasm. In terms of biological role, acts as a GTPase activating protein for RAB7A. Does not act on RAB4, RAB5 or RAB6. The protein is TBC1 domain family member 15 (TBC1D15) of Homo sapiens (Human).